Here is a 392-residue protein sequence, read N- to C-terminus: Chalcone synthase-like protein 1 (392 aa).

Residue cysteine 166 is part of the active site.

The protein belongs to the thiolase-like superfamily. Chalcone/stilbene synthases family. Expressed at the same level in leaves and in glandular trichomes.

Its subcellular location is the cytoplasm. Chalcone synthase that may use malonyl-CoA and hexanoyl-CoA as substrates but without producing olivetol or olivetolic acid. The polypeptide is Chalcone synthase-like protein 1 (CAN383) (Cannabis sativa (Hemp)).